We begin with the raw amino-acid sequence, 611 residues long: Growth hormone receptor (611 aa).

The first 20 residues, 1–20 (MDLRHLLLTLVLVCANDSLS), serve as a signal peptide directing secretion. Residue N16 is glycosylated (N-linked (GlcNAc...) asparagine). Over 21-240 (ASDDVLRLPQ…EFVHCAEEIE (220 aa)) the chain is Extracellular. C34 and C44 form a disulfide bridge. Residue N53 is glycosylated (N-linked (GlcNAc...) asparagine). C75 and C86 are joined by a disulfide. N89 is a glycosylation site (N-linked (GlcNAc...) asparagine). Residues C100 and C114 are joined by a disulfide bond. The Fibronectin type-III domain occupies 125–228 (PPVHLNWTLL…EILYVSFSQA (104 aa)). N-linked (GlcNAc...) asparagine glycosylation is found at N130, N135, and N174. The short motif at 214–218 (FGEFS) is the WSXWS motif element. Residues 241-264 (FPWFLVVIFGACGLAVTVILILLS) traverse the membrane as a helical segment. Residues 265 to 611 (KQSRLKMLIF…STDQLNKIMP (347 aa)) lie on the Cytoplasmic side of the membrane. Residues 270 to 355 (KMLIFPPVPV…HLKSHSCLGA (86 aa)) are required for JAK2 binding. Residues 273-281 (IFPPVPVPK) carry the Box 1 motif motif. Positions 316 to 325 (DLWVEFIELD) match the UbE motif motif. The tract at residues 411-455 (SLPSLANTDTQQPRMSTRPENSQPWPPFADSIDAASPSAHNQLSN) is disordered. Residues 414–433 (SLANTDTQQPRMSTRPENSQ) show a composition bias toward polar residues.

The protein belongs to the type I cytokine receptor family. Type 1 subfamily. Post-translationally, the soluble form (GHBP) is produced by phorbol ester-promoted proteolytic cleavage at the cell surface (shedding) by ADAM17/TACE.

The protein localises to the cell membrane. It localises to the secreted. Its function is as follows. Receptor for pituitary gland growth hormone (GH1) involved in regulating postnatal body growth. On ligand binding, couples to the JAK2/STAT5 pathway. The soluble form (GHBP) acts as a reservoir of growth hormone in plasma and may be a modulator/inhibitor of GH signaling. This chain is Growth hormone receptor (GHR), found in Columba livia (Rock dove).